The sequence spans 1032 residues: uncharacterized protein (1032 aa).

3 disordered regions span residues 54–80 (NNNN…NNNN), 391–451 (QLQI…QTHL), and 884–934 (INNE…SKVK). Positions 884 to 907 (INNENNNENNNNYNGNINSNNNNN) are enriched in low complexity.

This is an uncharacterized protein from Dictyostelium discoideum (Social amoeba).